The following is a 263-amino-acid chain: Cobalt-precorrin-6A reductase (263 aa).

This sequence belongs to the precorrin-6x reductase family.

It carries out the reaction Co-precorrin-6B + NAD(+) = Co-precorrin-6A + NADH + H(+). It participates in cofactor biosynthesis; adenosylcobalamin biosynthesis; cob(II)yrinate a,c-diamide from sirohydrochlorin (anaerobic route): step 7/10. Functionally, catalyzes the reduction of the macrocycle of cobalt-precorrin-6A to cobalt-precorrin-6B. This is Cobalt-precorrin-6A reductase (cbiJ) from Salmonella typhimurium (strain LT2 / SGSC1412 / ATCC 700720).